The following is a 519-amino-acid chain: Membrane protein insertase YidC (519 aa).

Helical transmembrane passes span 6–26, 298–318, 324–344, 390–410, 434–454, and 471–491; these read ILFV…FAQP, VDFG…VFFY, YGWA…PLTL, LGGC…FTML, FMQF…IGMF, and IMYI…SGLV.

The protein belongs to the OXA1/ALB3/YidC family. Type 1 subfamily. As to quaternary structure, interacts with the Sec translocase complex via SecD. Specifically interacts with transmembrane segments of nascent integral membrane proteins during membrane integration.

The protein localises to the cell inner membrane. Functionally, required for the insertion and/or proper folding and/or complex formation of integral membrane proteins into the membrane. Involved in integration of membrane proteins that insert both dependently and independently of the Sec translocase complex, as well as at least some lipoproteins. Aids folding of multispanning membrane proteins. This chain is Membrane protein insertase YidC, found in Endomicrobium trichonymphae.